A 92-amino-acid polypeptide reads, in one-letter code: Kinetoplastid membrane protein 11C (92 aa).

Belongs to the KMP-11 family. Monomer.

It localises to the cytoplasm. It is found in the cytoskeleton. The protein resides in the cell projection. The protein localises to the cilium. Its subcellular location is the flagellum. May be involved in the regulation of the cytoskeleton through interaction with the subpellicular microtubules. May be involved in parasite mobility and attachment to the surface of the host cell. Behaves as a strong immunogen during infection. This is Kinetoplastid membrane protein 11C (KMP-11C) from Leishmania infantum.